Here is a 318-residue protein sequence, read N- to C-terminus: NADH-quinone oxidoreductase subunit H 2 (318 aa).

A run of 9 helical transmembrane segments spans residues 4-24, 77-97, 106-126, 146-166, 179-199, 214-234, 238-258, 262-282, and 293-313; these read LLIA…AGVF, LAPA…AFAP, VGVL…VLGA, LAYE…AGSF, LWFI…GLAA, LVAG…FLGE, ILLV…GPIL, VWFG…RAAL, and FAWK…AWIA.

The protein belongs to the complex I subunit 1 family. As to quaternary structure, NDH-1 is composed of 14 different subunits. Subunits NuoA, H, J, K, L, M, N constitute the membrane sector of the complex.

It is found in the cell inner membrane. It carries out the reaction a quinone + NADH + 5 H(+)(in) = a quinol + NAD(+) + 4 H(+)(out). In terms of biological role, NDH-1 shuttles electrons from NADH, via FMN and iron-sulfur (Fe-S) centers, to quinones in the respiratory chain. The immediate electron acceptor for the enzyme in this species is believed to be ubiquinone. Couples the redox reaction to proton translocation (for every two electrons transferred, four hydrogen ions are translocated across the cytoplasmic membrane), and thus conserves the redox energy in a proton gradient. This subunit may bind ubiquinone. The sequence is that of NADH-quinone oxidoreductase subunit H 2 from Cereibacter sphaeroides (strain ATCC 17029 / ATH 2.4.9) (Rhodobacter sphaeroides).